The primary structure comprises 263 residues: Ribonuclease HII (263 aa).

The RNase H type-2 domain maps to 74-262; it reads EHVAGLDEVG…VQETAATRQT (189 aa). Asp-80, Glu-81, and Asp-172 together coordinate a divalent metal cation.

This sequence belongs to the RNase HII family. Requires Mn(2+) as cofactor. It depends on Mg(2+) as a cofactor.

It is found in the cytoplasm. It carries out the reaction Endonucleolytic cleavage to 5'-phosphomonoester.. Its function is as follows. Endonuclease that specifically degrades the RNA of RNA-DNA hybrids. This Halalkalibacterium halodurans (strain ATCC BAA-125 / DSM 18197 / FERM 7344 / JCM 9153 / C-125) (Bacillus halodurans) protein is Ribonuclease HII (rnhB).